The following is a 295-amino-acid chain: Acetylglutamate kinase (295 aa).

Residues 66-67 (GG), R88, and N193 contribute to the substrate site.

It belongs to the acetylglutamate kinase family. ArgB subfamily.

Its subcellular location is the cytoplasm. The catalysed reaction is N-acetyl-L-glutamate + ATP = N-acetyl-L-glutamyl 5-phosphate + ADP. The protein operates within amino-acid biosynthesis; L-arginine biosynthesis; N(2)-acetyl-L-ornithine from L-glutamate: step 2/4. Catalyzes the ATP-dependent phosphorylation of N-acetyl-L-glutamate. The polypeptide is Acetylglutamate kinase (Rhizobium leguminosarum bv. trifolii (strain WSM2304)).